The sequence spans 177 residues: UPF0316 protein STH2077 (177 aa).

Transmembrane regions (helical) follow at residues 9–29 (AALD…VNTV) and 41–61 (LASA…GLVV).

This sequence belongs to the UPF0316 family.

It localises to the cell membrane. The sequence is that of UPF0316 protein STH2077 from Symbiobacterium thermophilum (strain DSM 24528 / JCM 14929 / IAM 14863 / T).